The primary structure comprises 25 residues: Small ribosomal subunit protein uS19 (25 aa).

Residues 1-25 form a disordered region; the sequence is GHKLGEFAPTRTFRGHKKEDKKVKR.

Belongs to the universal ribosomal protein uS19 family.

Functionally, protein S19 forms a complex with S13 that binds strongly to the 16S ribosomal RNA. The protein is Small ribosomal subunit protein uS19 (rpsS) of Acholeplasma laidlawii.